The primary structure comprises 286 residues: Pyridoxal kinase PdxY (286 aa).

Residues S9 and 44 to 45 (TQ) contribute to the substrate site. Residues D111, A143, E148, K181, and 208 to 211 (RPLV) contribute to the ATP site. Residue D223 participates in substrate binding.

This sequence belongs to the pyridoxine kinase family. PdxY subfamily. As to quaternary structure, homodimer. Requires Mg(2+) as cofactor.

The enzyme catalyses pyridoxal + ATP = pyridoxal 5'-phosphate + ADP + H(+). It functions in the pathway cofactor metabolism; pyridoxal 5'-phosphate salvage; pyridoxal 5'-phosphate from pyridoxal: step 1/1. Its function is as follows. Pyridoxal kinase involved in the salvage pathway of pyridoxal 5'-phosphate (PLP). Catalyzes the phosphorylation of pyridoxal to PLP. The sequence is that of Pyridoxal kinase PdxY from Salmonella paratyphi A (strain ATCC 9150 / SARB42).